Here is a 161-residue protein sequence, read N- to C-terminus: Short form salivary protein D7S (161 aa).

Residues Met1 to Ala18 form the signal peptide. Cystine bridges form between Cys33-Cys67, Cys47-Cys155, and Cys109-Cys125.

Belongs to the PBP/GOBP family.

The protein localises to the secreted. In terms of biological role, in contrast to the related D7 salivary proteins, does not bind serotonin. This chain is Short form salivary protein D7S, found in Culex quinquefasciatus (Southern house mosquito).